We begin with the raw amino-acid sequence, 579 residues long: Adenine/guanine permease AZG1 (579 aa).

12 helical membrane passes run 52–72 (AGTATFLTMAYILAVNASILS), 131–151 (LIVATVAASLIGCVIMGLMAN), 183–203 (TALAAVFIEGLIFLFISAIGF), 221–241 (AGIGLFLAFIGLQNNQGIGLV), 260–280 (ISLAPVITSANGTVSLLAGGS), 292–312 (MESPTFWLGIVGFVIIAYCLV), 320–340 (IYGIVFVTAVSWFRNTEVTAF), 379–399 (FWEALVTFLYVDILDTTGTLY), 414–434 (FAGQYFAFMSDASAIVIGSLL), 459–479 (AITVAVYFLLAMFFTPLLASI), 480–500 (PAWAVGPPLILVGVMMMKSVT), and 514–534 (FVTMILMPLTYSVAYGLIGGI).

The protein belongs to the nucleobase:cation symporter-2 (NCS2) (TC 2.A.40) family. Azg-like subfamily.

The protein resides in the membrane. In terms of biological role, transports natural purines (adenine and guanine) as well as purine analogs. Confers sensitivity to 8-azaadenine and 8-azaguanine (8-azg). The polypeptide is Adenine/guanine permease AZG1 (AZG1) (Arabidopsis thaliana (Mouse-ear cress)).